A 199-amino-acid polypeptide reads, in one-letter code: Recombination protein RecR (199 aa).

The C4-type zinc-finger motif lies at 58–73; it reads CSVCFTLSDTPVCAIC. The Toprim domain maps to 81–176; the sequence is SLLCVVEGPT…TVTRIASGMP (96 aa).

It belongs to the RecR family.

May play a role in DNA repair. It seems to be involved in an RecBC-independent recombinational process of DNA repair. It may act with RecF and RecO. In Desulfosudis oleivorans (strain DSM 6200 / JCM 39069 / Hxd3) (Desulfococcus oleovorans), this protein is Recombination protein RecR.